A 125-amino-acid chain; its full sequence is Small ribosomal subunit protein uS13 (125 aa).

Positions 92–125 (RRHLPVHGQRTKTNARTRKGPKKTVAGKKKAGKK) are disordered.

It belongs to the universal ribosomal protein uS13 family. Part of the 30S ribosomal subunit. Forms a loose heterodimer with protein S19. Forms two bridges to the 50S subunit in the 70S ribosome.

Its function is as follows. Located at the top of the head of the 30S subunit, it contacts several helices of the 16S rRNA. In the 70S ribosome it contacts the 23S rRNA (bridge B1a) and protein L5 of the 50S subunit (bridge B1b), connecting the 2 subunits; these bridges are implicated in subunit movement. Contacts the tRNAs in the A and P-sites. The protein is Small ribosomal subunit protein uS13 of Saccharopolyspora erythraea (strain ATCC 11635 / DSM 40517 / JCM 4748 / NBRC 13426 / NCIMB 8594 / NRRL 2338).